The chain runs to 710 residues: FAST kinase domain-containing protein 2, mitochondrial (710 aa).

Phosphoserine occurs at positions 126 and 140. An RAP domain is found at 634-691 (VAVLCVSRSAYCLGSSHPRGFLAMKMRHLNAMGFHVILVNNWEMDKLEMEDAVTFLKT). The residue at position 708 (Ser-708) is a Phosphoserine.

This sequence belongs to the FAST kinase family. As to quaternary structure, monomer. Found in a complex with GRSF1, DDX28, DHX30 and FASTKD5. Associates with the 16S mitochondrial rRNA (16S mt-rRNA). Forms a regulatory protein-RNA complex, consisting of RCC1L, NGRN, RPUSD3, RPUSD4, TRUB2, FASTKD2 and 16S mt-rRNA. As to expression, expression detected in spleen, thymus, testis, ovary, colon, heart, smooth muscle, kidney, brain, lung, liver and white adipose tissue with highest expression in heart, smooth muscle and thyroid.

It localises to the mitochondrion matrix. The protein resides in the mitochondrion nucleoid. Its function is as follows. Plays an important role in assembly of the mitochondrial large ribosomal subunit. As a component of a functional protein-RNA module, consisting of RCC1L, NGRN, RPUSD3, RPUSD4, TRUB2, FASTKD2 and 16S mitochondrial ribosomal RNA (16S mt-rRNA), controls 16S mt-rRNA abundance and is required for intra-mitochondrial translation. May play a role in mitochondrial apoptosis. In Homo sapiens (Human), this protein is FAST kinase domain-containing protein 2, mitochondrial.